The chain runs to 43 residues: AVFTVRNNXPYSIAPGVLTGGGAAASTTGFQLAPGXSXNVNVP.

The protein belongs to the thaumatin family.

In Glebionis coronaria (Crown daisy), this protein is Thaumatin-like protein 1.